Consider the following 90-residue polypeptide: MSNITLNENAMLYLKADYYRPEMPTFKACYFRLSKIAQEQGWGTLPNLAQTKALFKAAVPEIIWTREAFKRANTQKKHAHKATPYLEQVM.

This is an uncharacterized protein from Haemophilus influenzae (strain ATCC 51907 / DSM 11121 / KW20 / Rd).